A 67-amino-acid polypeptide reads, in one-letter code: Small ribosomal subunit protein bS21 (67 aa).

The protein belongs to the bacterial ribosomal protein bS21 family.

The chain is Small ribosomal subunit protein bS21 from Granulibacter bethesdensis (strain ATCC BAA-1260 / CGDNIH1).